The sequence spans 339 residues: MSGQLERCEREWHELEGEFQELQETHRIYKQKLEELNALQTSCSSSINKQKTRLKDLKLTLQRYKRHASREEAELVQQMGANIKERQNVFFDMEAYLPKKNGLYLNLVLGNVNVTLLSNQAKFAYKDEYEKFKLYLTIILLLGAVACRFFLHYRVTDEVFNFLLVWYYCTLTIRESILISNGSRIKGWWVSHHYVSTFLSGVMLTWPNGLIYQKFRNQFLAFSIFQSCVQFLQYYYQRGCLYRLRALGERNHLDLTVEGFQSWMWRGLTFLLPFLFCGHFWQLYNAVTLFELSSHEECREWQVFVLALTFLVLFLGNFLTTLKVVHTKLQQNRSKAKKP.

The stretch at 1–77 (MSGQLERCER…ASREEAELVQ (77 aa)) forms a coiled coil. Helical transmembrane passes span 102-124 (GLYL…AKFA), 132-152 (FKLY…FFLH), 159-179 (VFNF…SILI), 187-207 (GWWV…LTWP), 270-290 (FLLP…VTLF), and 302-322 (QVFV…LTTL).

Belongs to the TMEM120 family. As to quaternary structure, heterooligomer with TMEM120A.

Its subcellular location is the nucleus inner membrane. In terms of biological role, necessary for efficient adipogenesis. Does not show ion channel activity. This is Transmembrane protein 120B (TMEM120B) from Bos taurus (Bovine).